The primary structure comprises 190 residues: Iron-sulfur protein (190 aa).

Positions 8 to 36 constitute a 4Fe-4S ferredoxin-type 1 domain; the sequence is VIIYANPDHCLSCHSCELACAVAHSGGHD. Cys17, Cys20, Cys23, Cys27, Cys65, Cys68, Cys73, Cys77, Cys96, Cys99, Cys102, Cys106, Cys133, Cys136, Cys150, and Cys154 together coordinate [4Fe-4S] cluster. 4Fe-4S ferredoxin-type domains follow at residues 87–116 and 133–164; these read GQVQ…VRSE and CDLC…MVDL.

Its function is as follows. The carbon monoxide dehydrogenase (CODH) oxidizes carbon monoxide coupled, via CooF, to the reduction of a hydrogen cation by a hydrogenase (probably CooH). CooF is required in stoichiometric amounts in vitro for anchoring CODH to the membrane as well as for conveying the electrons to the hydrogenase. The sequence is that of Iron-sulfur protein (cooF) from Rhodospirillum rubrum.